Reading from the N-terminus, the 454-residue chain is Flavonoid 3-O-glucosyltransferase (454 aa).

Threonine 25 contributes to the UDP binding site. Histidine 26 (proton acceptor) is an active-site residue. Arginine 89 provides a ligand contact to myricetin. Aspartate 124 acts as the Charge relay in catalysis. Residues histidine 155, glutamate 192, and phenylalanine 202 each coordinate myricetin. UDP is bound by residues serine 282, serine 308, tryptophan 334, and alanine 335. UDP-alpha-D-glucose is bound by residues alanine 335, glutamine 337, histidine 352, tryptophan 355, asparagine 356, serine 357, and glutamate 360. Position 352 (histidine 352) interacts with UDP. UDP contacts are provided by asparagine 356, serine 357, and glutamate 360. Glycine 375 is a binding site for myricetin. UDP-alpha-D-glucose is bound by residues aspartate 376 and glutamine 377.

The protein belongs to the UDP-glycosyltransferase family. Highly expressed in flower buds, flowers and pods. Lower expression in leaves, petioles and stems.

It participates in secondary metabolite biosynthesis; flavonoid biosynthesis. Functionally, catalyzes the glycosylation of flavonoids at the 3-O-position. Glycosylates the 7-O-position if the 3-O-position is not available. Also able to perform 3-O-glycosylation of anthocyanidins. In Medicago truncatula (Barrel medic), this protein is Flavonoid 3-O-glucosyltransferase (UGT78G1).